The sequence spans 288 residues: Lipoyl synthase (288 aa).

[4Fe-4S] cluster contacts are provided by C42, C47, C53, C68, C72, C75, and S280. A Radical SAM core domain is found at 54 to 269 (WGEGTATFMI…EKYGIELGFR (216 aa)).

Belongs to the radical SAM superfamily. Lipoyl synthase family. The cofactor is [4Fe-4S] cluster.

It localises to the cytoplasm. The catalysed reaction is [[Fe-S] cluster scaffold protein carrying a second [4Fe-4S](2+) cluster] + N(6)-octanoyl-L-lysyl-[protein] + 2 oxidized [2Fe-2S]-[ferredoxin] + 2 S-adenosyl-L-methionine + 4 H(+) = [[Fe-S] cluster scaffold protein] + N(6)-[(R)-dihydrolipoyl]-L-lysyl-[protein] + 4 Fe(3+) + 2 hydrogen sulfide + 2 5'-deoxyadenosine + 2 L-methionine + 2 reduced [2Fe-2S]-[ferredoxin]. Its pathway is protein modification; protein lipoylation via endogenous pathway; protein N(6)-(lipoyl)lysine from octanoyl-[acyl-carrier-protein]: step 2/2. In terms of biological role, catalyzes the radical-mediated insertion of two sulfur atoms into the C-6 and C-8 positions of the octanoyl moiety bound to the lipoyl domains of lipoate-dependent enzymes, thereby converting the octanoylated domains into lipoylated derivatives. The sequence is that of Lipoyl synthase from Flavobacterium johnsoniae (strain ATCC 17061 / DSM 2064 / JCM 8514 / BCRC 14874 / CCUG 350202 / NBRC 14942 / NCIMB 11054 / UW101) (Cytophaga johnsonae).